The following is a 258-amino-acid chain: Cholera enterotoxin subunit A (258 aa).

Residues 1–18 (MVKIIFVFFIFLSSFSYA) form the signal peptide. NAD(+) is bound by residues 25–28 (RADS) and 41–43 (MPR). Residue Glu-130 is part of the active site. Cys-205 and Cys-217 are oxidised to a cystine.

It belongs to the enterotoxin A family. In terms of assembly, the holotoxin (choleragen) consists of a pentameric ring of B subunits whose central pore is occupied by the A subunit. The A subunit contains two chains, A1 and A2, linked by a disulfide bridge. Interaction with the host protein ARF6 causes a conformation change so that the enterotoxin subunit A1 can bind NAD and catalyze the ADP-ribosylation of the host Gs alpha.

Functionally, the A1 chain catalyzes the ADP-ribosylation of Gs alpha, a GTP-binding regulatory protein, to activate the adenylate cyclase. This leads to an overproduction of cAMP and eventually to a hypersecretion of chloride and bicarbonate followed by water, resulting in the characteristic cholera stool. The A2 chain tethers A1 to the pentameric ring. This Vibrio cholerae serotype O1 (strain ATCC 39315 / El Tor Inaba N16961) protein is Cholera enterotoxin subunit A (ctxA).